The sequence spans 117 residues: Large ribosomal subunit protein uL22 (117 aa).

It belongs to the universal ribosomal protein uL22 family. In terms of assembly, part of the 50S ribosomal subunit.

Its function is as follows. This protein binds specifically to 23S rRNA; its binding is stimulated by other ribosomal proteins, e.g. L4, L17, and L20. It is important during the early stages of 50S assembly. It makes multiple contacts with different domains of the 23S rRNA in the assembled 50S subunit and ribosome. The globular domain of the protein is located near the polypeptide exit tunnel on the outside of the subunit, while an extended beta-hairpin is found that lines the wall of the exit tunnel in the center of the 70S ribosome. This Lacticaseibacillus casei (strain BL23) (Lactobacillus casei) protein is Large ribosomal subunit protein uL22.